The chain runs to 214 residues: NKG2-D type II integral membrane protein (214 aa).

The Cytoplasmic portion of the chain corresponds to 1-56; it reads MGWIRDRRSPSSMEIRELHNRDVINRGAFKSRQKRTQTLITSKCGENPSPFFLARS. A helical; Signal-anchor for type II membrane protein transmembrane segment spans residues 57–77; the sequence is IAIAMGIRFIVMVMIYSGMII. Residues 78-214 are Extracellular-facing; that stretch reads NLLFNQEAPS…NTYICMKRTV (137 aa). 2 cysteine pairs are disulfide-bonded: C94/C103 and C97/C108. A C-type lectin domain is found at 98-210; that stretch reads PKNWICYRNS…CLTLNTYICM (113 aa). Residues N113, N129, N161, and N184 are each glycosylated (N-linked (GlcNAc...) asparagine). 2 disulfides stabilise this stretch: C125–C209 and C187–C201.

In terms of assembly, homodimer; disulfide-linked. Heterohexamer composed of two subunits of KLRK1 and four subunits of HCST/DAP10. Interacts (via transmembrane domain) with HCST/DAP10 (via transmembrane domain); the interaction is required for KLRK1 NK cell surface and induces NK cell-mediated cytotoxicity. Can form disulfide-bonded heterodimer with CD94. Interacts with CEACAM1; recruits PTPN6 that dephosphorylates VAV1. In terms of tissue distribution, detected in peripheral blood leukocytes, macrophages, monocytes and natural killer cells.

It localises to the cell membrane. Functions as an activating and costimulatory receptor involved in immunosurveillance upon binding to various cellular stress-inducible ligands displayed at the surface of autologous tumor cells and virus-infected cells. Provides both stimulatory and costimulatory innate immune responses on activated killer (NK) cells, leading to cytotoxic activity. Acts as a costimulatory receptor for T-cell receptor (TCR) in CD8(+) T-cell-mediated adaptive immune responses by amplifying T-cell activation. Stimulates perforin-mediated elimination of ligand-expressing tumor cells. Signaling involves calcium influx, culminating in the expression of TNF-alpha. Participates in NK cell-mediated bone marrow graft rejection. May play a regulatory role in differentiation and survival of NK cells. Binds to ligands belonging to various subfamilies of MHC class I-related glycoproteins. The sequence is that of NKG2-D type II integral membrane protein (KLRK1) from Sus scrofa (Pig).